Here is a 276-residue protein sequence, read N- to C-terminus: Large ribosomal subunit protein uL2 (276 aa).

Disordered stretches follow at residues Met1 to Asp20 and Thr219 to Lys276. Residues Asn7 to Asp20 show a composition bias toward polar residues.

Belongs to the universal ribosomal protein uL2 family. Part of the 50S ribosomal subunit. Forms a bridge to the 30S subunit in the 70S ribosome.

In terms of biological role, one of the primary rRNA binding proteins. Required for association of the 30S and 50S subunits to form the 70S ribosome, for tRNA binding and peptide bond formation. It has been suggested to have peptidyltransferase activity; this is somewhat controversial. Makes several contacts with the 16S rRNA in the 70S ribosome. The chain is Large ribosomal subunit protein uL2 from Bacillus anthracis (strain A0248).